The sequence spans 523 residues: MARVLQLSLTALLLPVAIAMHSDCIFKKEQAMCLERIQRANDLMGLNESSPGCPGMWDNITCWKPAQVGEMVLVSCPEVFRIFNPDQVWMTETIGDSGFADSNSLEITDMGVVGRNCTEDGWSEPFPHYFDACGFDDYEPESGDQDYYYLSVKALYTVGYSTSLATLTTAMVILCRFRKLHCTRNFIHMNLFVSFMLRAISVFIKDWILYAEQDSSHCFVSTVECKAVMVFFHYCVVSNYFWLFIEGLYLFTLLVETFFPERRYFYWYTIIGWGTPTVCVTVWAVLRLYFDDAGCWDMNDSTALWWVIKGPVVGSIMVNFVLFIGIIIILVQKLQSPDMGGNESSIYLTNLRLRVPKKTREDPLPVPSDQHSPPFLSCVQKCYCKPQRAQQHSCKMSELSTITLRLARSTLLLIPLFGIHYTVFAFSPENVSKRERLVFELGLGSFQGFVVAVLYCFLNGEVQAEIKRKWRSWKVNRYFTMDFKHRHPSLASSGVNGGTQLSILSKSSSQLRMSSLPADNLAT.

A signal peptide spans 1–19; that stretch reads MARVLQLSLTALLLPVAIA. The Extracellular portion of the chain corresponds to 20-151; it reads MHSDCIFKKE…SGDQDYYYLS (132 aa). Cystine bridges form between Cys33-Cys62, Cys53-Cys117, and Cys76-Cys133. 3 N-linked (GlcNAc...) asparagine glycosylation sites follow: Asn47, Asn59, and Asn116. The tract at residues 124-138 is important for ADCYAP1/PACAP ligand binding and specificity; that stretch reads EPFPHYFDACGFDDY. Residues 124-138 are important for ligand binding and specificity; it reads EPFPHYFDACGFDDY. Residues 152 to 176 form a helical membrane-spanning segment; sequence VKALYTVGYSTSLATLTTAMVILCR. Residues 177 to 186 lie on the Cytoplasmic side of the membrane; sequence FRKLHCTRNF. Residues 187–207 traverse the membrane as a helical segment; it reads IHMNLFVSFMLRAISVFIKDW. The Extracellular portion of the chain corresponds to 208 to 222; that stretch reads ILYAEQDSSHCFVST. The chain crosses the membrane as a helical span at residues 223-248; sequence VECKAVMVFFHYCVVSNYFWLFIEGL. A disulfide bridge links Cys225 with Cys295. Residues 249–266 are Cytoplasmic-facing; sequence YLFTLLVETFFPERRYFY. Residues 267–289 form a helical membrane-spanning segment; it reads WYTIIGWGTPTVCVTVWAVLRLY. At 290 to 301 the chain is on the extracellular side; sequence FDDAGCWDMNDS. Residues 302–328 traverse the membrane as a helical segment; it reads TALWWVIKGPVVGSIMVNFVLFIGIII. Topologically, residues 329-346 are cytoplasmic; it reads ILVQKLQSPDMGGNESSI. Residues 347–429 form a helical membrane-spanning segment; the sequence is YLTNLRLRVP…HYTVFAFSPE (83 aa). Over 430 to 434 the chain is Extracellular; sequence NVSKR. A helical transmembrane segment spans residues 435–458; sequence ERLVFELGLGSFQGFVVAVLYCFL. At 459–523 the chain is on the cytoplasmic side; that stretch reads NGEVQAEIKR…SSLPADNLAT (65 aa). Phosphoserine occurs at positions 489 and 502.

The protein belongs to the G-protein coupled receptor 2 family. As to quaternary structure, interacts with maxadilan, a vasodilator peptide from Lutzomyia longipalpis saliva; the interaction results in ADCYAP1R1 activation. Hypothalamus, anterior pituitary, adrenal medulla, testicular germ cells.

It is found in the cell membrane. In terms of biological role, g protein-coupled receptor activated by the neuropeptide pituitary adenylate cyclase-activating polypeptide (ADCYAP1/PACAP). Binds both PACAP27 and PACAP38 bioactive peptides. Ligand binding causes a conformation change that triggers signaling via guanine nucleotide-binding proteins (G proteins) and modulates the activity of downstream effectors. Activates cAMP-dependent pathway. May regulate the release of adrenocorticotropin, luteinizing hormone, growth hormone, prolactin, epinephrine, and catecholamine. May play a role in spermatogenesis and sperm motility. Causes smooth muscle relaxation and secretion in the gastrointestinal tract. The protein is Pituitary adenylate cyclase-activating polypeptide type I receptor of Rattus norvegicus (Rat).